Reading from the N-terminus, the 1243-residue chain is Serine/threonine-protein kinase WNK4 (1243 aa).

Over residues 1 to 17 the composition is skewed to polar residues; the sequence is MLASPATETTVLMSQTE. Positions 1–142 are disordered; sequence MLASPATETT…GPGSREPLRV (142 aa). The segment covering 65-77 has biased composition (low complexity); it reads VDLGLLSSWSLPA. Residues 78 to 103 are compositionally biased toward pro residues; that stretch reads SPAPDPPDPPDSAGPGPARSPPPSSK. Residue Ser-97 is modified to Phosphoserine. A compositionally biased stretch (basic and acidic residues) spans 118–127; the sequence is AAEDSARPEL. Glycyl lysine isopeptide (Lys-Gly) (interchain with G-Cter in ubiquitin) cross-links involve residues Lys-157 and Lys-175. One can recognise a Protein kinase domain in the interval 174–432; that stretch reads LKFDIEIGRG…IQDLLAHAFF (259 aa). Ser-184 is a binding site for ATP. Residues Lys-186, Lys-226, and Lys-241 each participate in a glycyl lysine isopeptide (Lys-Gly) (interchain with G-Cter in ubiquitin) cross-link. ATP contacts are provided by residues 254-257 and Lys-304; that span reads TELM. The active-site Proton acceptor is Asp-321. Residue Lys-328 forms a Glycyl lysine isopeptide (Lys-Gly) (interchain with G-Cter in ubiquitin) linkage. Ser-331 and Ser-335 each carry phosphoserine; by autocatalysis. Residues Lys-387, Lys-393, Lys-450, and Lys-454 each participate in a glycyl lysine isopeptide (Lys-Gly) (interchain with G-Cter in ubiquitin) cross-link. Residues 526 to 564 form a disordered region; sequence KARELEALPPEPGPPPATVPMAPGPPSVFPPEPEEPEAD. Residues 534–556 are compositionally biased toward pro residues; that stretch reads PPEPGPPPATVPMAPGPPSVFPP. The interaction with KLHL3 stretch occupies residues 557–567; the sequence is EPEEPEADQHQ. Ser-575 carries the phosphoserine modification. The segment covering 630 to 641 has biased composition (low complexity); the sequence is SGPGSDFSPGDS. Disordered regions lie at residues 630–683, 751–871, and 943–1110; these read SGPG…SVSD, DTGP…STPE, and SPSP…SPVW. A compositionally biased stretch (basic residues) spans 663–676; that stretch reads PPGRNLRRRPRSRL. Pro residues predominate over residues 767–780; it reads EPAPLPALPVPLPD. The segment covering 797 to 812 has biased composition (low complexity); sequence WTAFSTSSSSPGTPLS. A compositionally biased stretch (pro residues) spans 822–843; the sequence is PISPGPIFPITSPPCHPSPSPF. 3 stretches are compositionally biased toward low complexity: residues 844 to 854, 862 to 871, and 943 to 952; these read SPISSQVSSNP, PLPFSSSTPE, and SPSPGLLSQS. Residues 953–970 are compositionally biased toward pro residues; the sequence is PPAPPSPLPSLPLPPPVA. Residue Lys-1010 forms a Glycyl lysine isopeptide (Lys-Gly) (interchain with G-Cter in ubiquitin) linkage. The RFXV motif motif lies at 1016-1019; the sequence is RFQV. At Ser-1035 the chain carries Phosphoserine. Over residues 1065-1077 the composition is skewed to basic and acidic residues; it reads ETREALAESDRAA. Glycyl lysine isopeptide (Lys-Gly) (interchain with G-Cter in ubiquitin) cross-links involve residues Lys-1144, Lys-1157, and Lys-1158. Positions 1166 to 1243 are disordered; it reads RLGKQPPPGI…VTFAGDVGRM (78 aa). 2 stretches are compositionally biased toward polar residues: residues 1193-1204 and 1216-1228; these read SFPTSRRNSLQR and NSLSGSSTGSQEQ. Ser-1217 is modified (phosphoserine).

Belongs to the protein kinase superfamily. Ser/Thr protein kinase family. WNK subfamily. In terms of assembly, interacts with the C-terminal region of KCNJ1. Requires Mg(2+) as cofactor. Autophosphorylated at Ser-331 and Ser-335, promoting its activation. Phosphorylated by WNK1 and WNK3. Phosphorylated at Ser-575 in a MAP3K15/ASK3-dependent process in response to osmotic stress or hypotonic low-chloride stimulation. In terms of processing, ubiquitinated by the BCR(KLHL3) complex, leading to its degradation. Also ubiquitinated by the BCR(KLHL2) complex. As to expression, expressed in kidney, colon and skin.

Its subcellular location is the cell junction. It localises to the tight junction. The enzyme catalyses L-seryl-[protein] + ATP = O-phospho-L-seryl-[protein] + ADP + H(+). The catalysed reaction is L-threonyl-[protein] + ATP = O-phospho-L-threonyl-[protein] + ADP + H(+). Its activity is regulated as follows. Activation requires autophosphorylation of Ser-331 and Ser-335. Autophosphorylation and subsequent activation is inhibited by increases in intracellular ionic strength: Cl(-) potently inhibits WNK4 kinase activity via direct binding. Also inhibited by K(+) ions. Functionally, serine/threonine-protein kinase component of the WNK4-SPAK/OSR1 kinase cascade, which acts as a key regulator of ion transport in the distal nephron and blood pressure. The WNK4-SPAK/OSR1 kinase cascade is composed of WNK4, which mediates phosphorylation and activation of downstream kinases OXSR1/OSR1 and STK39/SPAK. Following activation, OXSR1/OSR1 and STK39/SPAK catalyze phosphorylation of ion cotransporters, such as SLC12A1/NKCC2, SLC12A2/NKCC1, SLC12A3/NCC, SLC12A5/KCC2 or SLC12A6/KCC3, regulating their activity. Acts as a molecular switch that regulates the balance between renal salt reabsorption and K(+) secretion by modulating the activities of renal transporters and channels, including the Na-Cl cotransporter SLC12A3/NCC and the K(+) channel, KCNJ1/ROMK. Regulates NaCl reabsorption in the distal nephron by activating the thiazide-sensitive Na-Cl cotransporter SLC12A3/NCC in distal convoluted tubule cells of kidney: activates SLC12A3/NCC in a OXSR1/OSR1- and STK39/SPAK-dependent process. Also acts as a scaffold protein independently of its protein kinase activity: negatively regulates cell membrane localization of various transporters and channels (CFTR, KCNJ1/ROMK, SLC4A4, SLC26A9 and TRPV4) by clathrin-dependent endocytosis. Also inhibits the activity of the epithelial Na(+) channel (ENaC) SCNN1A, SCNN1B, SCNN1D in a inase-independent mechanism. May also phosphorylate NEDD4L. The sequence is that of Serine/threonine-protein kinase WNK4 from Homo sapiens (Human).